A 298-amino-acid chain; its full sequence is Probable D,D-dipeptide transport system permease protein DdpC (298 aa).

Residues 1–33 (MMLSEETSAVRPQKQTRFNGAKLVWMLKGSPLT) are Cytoplasmic-facing. Residues 34–54 (VTSAVIIVLMLLMMIFSPWLA) form a helical membrane-spanning segment. Residues 55–96 (THDPNAIDLTARLLPPSAAHWFGTDEVGRDLFSRVLVGSQQS) are Periplasmic-facing. The chain crosses the membrane as a helical span at residues 97–117 (ILAGLVVVAIAGMIGSLLGCL). Residues 97 to 282 (ILAGLVVVAI…LTAVGFNLFG (186 aa)) enclose the ABC transmembrane type-1 domain. Topologically, residues 118 to 124 (SGVLGGR) are cytoplasmic. The next 2 helical transmembrane spans lie at 125–145 (ADAIIMRIMDIMLSIPSLVLT) and 146–166 (MALAAALGPSLFNAMLAIAIV). The Cytoplasmic portion of the chain corresponds to 167–217 (RIPFYVRLARGQALVVRQYTYVQAAKTFGASRWHLINWHILRNSLPPLIVQ). A helical membrane pass occupies residues 218 to 238 (ASLDIGSAILMAATLGFIGLG). Topologically, residues 239–260 (AQQPSAEWGAMVANGRNYVLDQ) are periplasmic. The helical transmembrane segment at 261–281 (WWYCAFPGAAILLTAVGFNLF) threads the bilayer. Residues 282–298 (GDGIRDLLDPKAGGKQS) are Cytoplasmic-facing.

It belongs to the binding-protein-dependent transport system permease family. OppBC subfamily. As to quaternary structure, the complex is composed of two ATP-binding proteins (DdpD and DdpF), two transmembrane proteins (DdpB and DdpC) and a solute-binding protein (DdpA).

Its subcellular location is the cell inner membrane. In terms of biological role, part of the ABC transporter complex DdpABCDF, which is probably involved in D,D-dipeptide transport. Probably responsible for the translocation of the substrate across the membrane. This is Probable D,D-dipeptide transport system permease protein DdpC (ddpC) from Escherichia coli (strain K12).